We begin with the raw amino-acid sequence, 406 residues long: E3 ubiquitin-protein ligase RING1 (406 aa).

Thr-24 carries the phosphothreonine modification. The interval 30 to 234 (MDGTEIAVSP…GGAGSEDSGD (205 aa)) is necessary for transcriptional repression. Ser-38 carries the phosphoserine modification. An RING-type zinc finger spans residues 48–88 (CPICLDMLKNTMTTKECLHRFCSDCIVTALRSGNKECPTCR). A phosphoserine mark is found at Ser-140, Ser-187, and Ser-190. Disordered regions lie at residues 148-263 (QAMH…GEIE) and 309-354 (QQQE…PSLE). The segment covering 175–187 (EPGEGEGDGEDVS) has biased composition (acidic residues). Positions 201 to 204 (KRPR) match the Nuclear localization signal motif. The segment covering 205–228 (GGGAGGSSVGTGGGGTGGVGGGAG) has biased composition (gly residues). A phosphothreonine mark is found at Thr-215 and Thr-220. Residues Ser-229 and Ser-232 each carry the phosphoserine modification. Positions 230–406 (EDSGDRGGTL…LCYAPTKDPK (177 aa)) are necessary for interaction with CBX2. Over residues 235-244 (RGGTLGGGTL) the composition is skewed to gly residues. Positions 246-258 (PPSPPGAPSPPEP) are enriched in pro residues. Residues Ser-248 and Ser-254 each carry the phosphoserine modification. Residues 315–343 (EPGGPGGGASDTGGPDGCGGEGGGAGGGD) show a composition bias toward gly residues.

In terms of assembly, component of chromatin-associated Polycomb (PcG) complexes. Interacts with BMI1. Part of the E2F6.com-1 complex in G0 phase composed of E2F6, MGA, MAX, TFDP1, CBX3, BAT8, EUHMTASE1, RING1, RNF2/RING2 MBLR, L3MBTL2 and YAF2. Interacts with CBX2 and PCGF6. Component of a PRC1-like complex. Component of repressive BCOR complex containing Polycomb group subcomplex at least composed of RYBP, PCGF1, BCOR and RNF2/RING2. Interacts with PCGF2, RNF2; CBX6, CBX7 and CBX8. Interacts with PHC2. Interacts with MN1. Interacts with USP26.

It is found in the nucleus. Its subcellular location is the nucleus speckle. The enzyme catalyses S-ubiquitinyl-[E2 ubiquitin-conjugating enzyme]-L-cysteine + [acceptor protein]-L-lysine = [E2 ubiquitin-conjugating enzyme]-L-cysteine + N(6)-ubiquitinyl-[acceptor protein]-L-lysine.. Its pathway is protein modification; protein ubiquitination. Constitutes one of the E3 ubiquitin-protein ligases that mediate monoubiquitination of 'Lys-119' of histone H2A, thereby playing a central role in histone code and gene regulation. H2A 'Lys-119' ubiquitination gives a specific tag for epigenetic transcriptional repression and participates in X chromosome inactivation of female mammals. Essential component of a Polycomb group (PcG) multiprotein PRC1-like complex, a complex class required to maintain the transcriptionally repressive state of many genes, including Hox genes, throughout development. PcG PRC1 complex acts via chromatin remodeling and modification of histones, rendering chromatin heritably changed in its expressibility. Compared to RNF2/RING2, it does not have the main E3 ubiquitin ligase activity on histone H2A, and it may rather act as a modulator of RNF2/RING2 activity. This chain is E3 ubiquitin-protein ligase RING1, found in Homo sapiens (Human).